The primary structure comprises 370 residues: Putative glutamate--cysteine ligase 2 (370 aa).

Belongs to the glutamate--cysteine ligase type 2 family. YbdK subfamily.

The enzyme catalyses L-cysteine + L-glutamate + ATP = gamma-L-glutamyl-L-cysteine + ADP + phosphate + H(+). Its function is as follows. ATP-dependent carboxylate-amine ligase which exhibits weak glutamate--cysteine ligase activity. This Herminiimonas arsenicoxydans protein is Putative glutamate--cysteine ligase 2.